A 122-amino-acid polypeptide reads, in one-letter code: Fluoride-specific ion channel FluC (122 aa).

4 helical membrane passes run 4 to 24, 34 to 54, 66 to 86, and 95 to 115; these read LLIA…GTAI, IGTM…MTLL, LALV…EWET, and FWIG…AVWF. Na(+) contacts are provided by Gly-74 and Thr-77.

The protein belongs to the fluoride channel Fluc/FEX (TC 1.A.43) family.

Its subcellular location is the cell inner membrane. The enzyme catalyses fluoride(in) = fluoride(out). With respect to regulation, na(+) is not transported, but it plays an essential structural role and its presence is essential for fluoride channel function. Its function is as follows. Fluoride-specific ion channel. Important for reducing fluoride concentration in the cell, thus reducing its toxicity. The protein is Fluoride-specific ion channel FluC of Solibacter usitatus (strain Ellin6076).